The chain runs to 86 residues: UPF0335 protein mll3968 (86 aa).

The protein belongs to the UPF0335 family.

This Mesorhizobium japonicum (strain LMG 29417 / CECT 9101 / MAFF 303099) (Mesorhizobium loti (strain MAFF 303099)) protein is UPF0335 protein mll3968.